A 274-amino-acid chain; its full sequence is Probable cyclic nucleotide phosphodiesterase RPA0124 (274 aa).

Fe cation contacts are provided by D8, H10, D49, N79, H155, H194, and H196. AMP contacts are provided by residues H10, D49, and 79–80 (NH). Residue H196 coordinates AMP.

Belongs to the cyclic nucleotide phosphodiesterase class-III family. Requires Fe(2+) as cofactor.

The chain is Probable cyclic nucleotide phosphodiesterase RPA0124 from Rhodopseudomonas palustris (strain ATCC BAA-98 / CGA009).